A 37-amino-acid chain; its full sequence is U4-theraphotoxin-Hhn1v (37 aa).

Cystine bridges form between Cys-3–Cys-17, Cys-7–Cys-28, and Cys-22–Cys-33.

It belongs to the neurotoxin 12 (Hwtx-2) family. 02 (Hwtx-2) subfamily. In terms of tissue distribution, expressed by the venom gland.

Its subcellular location is the secreted. In terms of biological role, postsynaptic neurotoxin. The protein is U4-theraphotoxin-Hhn1v of Cyriopagopus hainanus (Chinese bird spider).